Reading from the N-terminus, the 80-residue chain is Small ribosomal subunit protein bS18 (80 aa).

It belongs to the bacterial ribosomal protein bS18 family. Part of the 30S ribosomal subunit. Forms a tight heterodimer with protein bS6.

Functionally, binds as a heterodimer with protein bS6 to the central domain of the 16S rRNA, where it helps stabilize the platform of the 30S subunit. The sequence is that of Small ribosomal subunit protein bS18 from Methylocella silvestris (strain DSM 15510 / CIP 108128 / LMG 27833 / NCIMB 13906 / BL2).